The chain runs to 65 residues: MPKLKTRKAAAKRFKATGTGKFMRRRAFHNHLLDHKSPKLKRHLKTKAVVDERDAENVRLMLPYA.

Belongs to the bacterial ribosomal protein bL35 family.

This chain is Large ribosomal subunit protein bL35, found in Prochlorococcus marinus (strain NATL1A).